The sequence spans 309 residues: Ubiquitin domain-containing protein UBFD1 (309 aa).

Residues 1 to 80 are disordered; sequence MAAAGAPDGM…VSNGEDAGGG (80 aa). Acidic residues predominate over residues 9-19; it reads GMEEPGMDTEA. A compositionally biased stretch (low complexity) spans 35–57; it reads EAEAAAGAAAEDSGAARGSLQPA. The Ubiquitin-like domain maps to 84 to 159; it reads ELVDLKIIWN…IMVVGSTIND (76 aa). Residues 171 to 204 are disordered; sequence QQDAKAEENKKEPLCRQKQHRKVLDKGKPEDVMP. 2 stretches are compositionally biased toward basic and acidic residues: residues 174 to 185 and 192 to 201; these read AKAEENKKEPLC and KVLDKGKPED.

As to quaternary structure, binds polyubiquitin.

May play a role as NF-kappa-B regulator. The chain is Ubiquitin domain-containing protein UBFD1 (UBFD1) from Homo sapiens (Human).